Consider the following 641-residue polypeptide: 1-deoxy-D-xylulose-5-phosphate synthase (641 aa).

Residues His-80 and 121 to 123 (GHS) contribute to the thiamine diphosphate site. Asp-152 contacts Mg(2+). Residues 153–154 (GS), Asn-181, Tyr-290, and Glu-372 contribute to the thiamine diphosphate site. Asn-181 is a Mg(2+) binding site.

The protein belongs to the transketolase family. DXPS subfamily. As to quaternary structure, homodimer. Requires Mg(2+) as cofactor. Thiamine diphosphate serves as cofactor.

It catalyses the reaction D-glyceraldehyde 3-phosphate + pyruvate + H(+) = 1-deoxy-D-xylulose 5-phosphate + CO2. It functions in the pathway metabolic intermediate biosynthesis; 1-deoxy-D-xylulose 5-phosphate biosynthesis; 1-deoxy-D-xylulose 5-phosphate from D-glyceraldehyde 3-phosphate and pyruvate: step 1/1. Its function is as follows. Catalyzes the acyloin condensation reaction between C atoms 2 and 3 of pyruvate and glyceraldehyde 3-phosphate to yield 1-deoxy-D-xylulose-5-phosphate (DXP). This chain is 1-deoxy-D-xylulose-5-phosphate synthase, found in Rhodobacter capsulatus (Rhodopseudomonas capsulata).